We begin with the raw amino-acid sequence, 93 residues long: Phosphoribosyl-ATP pyrophosphatase (93 aa).

Belongs to the PRA-PH family.

The protein resides in the cytoplasm. The catalysed reaction is 1-(5-phospho-beta-D-ribosyl)-ATP + H2O = 1-(5-phospho-beta-D-ribosyl)-5'-AMP + diphosphate + H(+). Its pathway is amino-acid biosynthesis; L-histidine biosynthesis; L-histidine from 5-phospho-alpha-D-ribose 1-diphosphate: step 2/9. The sequence is that of Phosphoribosyl-ATP pyrophosphatase from Mycobacterium sp. (strain JLS).